The following is a 285-amino-acid chain: Phosphoribosylaminoimidazole-succinocarboxamide synthase (285 aa).

It belongs to the SAICAR synthetase family.

The catalysed reaction is 5-amino-1-(5-phospho-D-ribosyl)imidazole-4-carboxylate + L-aspartate + ATP = (2S)-2-[5-amino-1-(5-phospho-beta-D-ribosyl)imidazole-4-carboxamido]succinate + ADP + phosphate + 2 H(+). The protein operates within purine metabolism; IMP biosynthesis via de novo pathway; 5-amino-1-(5-phospho-D-ribosyl)imidazole-4-carboxamide from 5-amino-1-(5-phospho-D-ribosyl)imidazole-4-carboxylate: step 1/2. The sequence is that of Phosphoribosylaminoimidazole-succinocarboxamide synthase from Leptospira interrogans serogroup Icterohaemorrhagiae serovar copenhageni (strain Fiocruz L1-130).